Here is a 720-residue protein sequence, read N- to C-terminus: DNA replication licensing factor mcm7-B (720 aa).

Residues 183–210 (CDQCGAETYQPIQSPTFMPLIMCPSREC) form a C4-type zinc finger. Positions 331 to 537 (FYEKLAASIA…NDLRLAQHIT (207 aa)) constitute an MCM domain. ATP contacts are provided by Tyr-344, Gly-383, Ala-385, Lys-386, Ser-387, Asn-488, Arg-513, and Arg-603. The short motif at 512-515 (SRFD) is the Arginine finger element.

It belongs to the MCM family. In terms of assembly, component of the mcm2-7 complex (RLF-M). The complex forms a toroidal hexameric ring with the proposed subunit order mcm2-mcm6-mcm4-mcm7-mcm3-mcm5. The heterodimer of mmcm3/mcm5 interacts with mcm4, mmcm6, mcm7 and weakly with mcm2. The N-terminus is required for interaction with mmcm3, though this interaction may not be direct, and remains in a complex with mmcm3 throughout the cell cycle. Begins to associate with zmcm6 at the neurula stage. Component of the replisome complex. Component of the CMG helicase complex, composed of the mcm2-7 complex, the GINS complex and cdc45. In terms of processing, ubiquitinated by traip when forks converge following formation of DNA interstrand cross-links. Short ubiquitin chains on mcm7 promote recruitment of DNA glycosylase neil3. If the interstrand cross-link cannot be cleaved by neil3, the ubiquitin chains continue to grow on mcm7, promoting the unloading of the CMG helicase complex by the vcp/p97 ATPase.

Its subcellular location is the nucleus. It localises to the chromosome. The catalysed reaction is ATP + H2O = ADP + phosphate + H(+). Functionally, acts as a component of the mcm2-7 complex (mcm complex) which is the putative replicative helicase essential for 'once per cell cycle' DNA replication initiation and elongation in eukaryotic cells. The active ATPase sites in the mcm2-7 ring are formed through the interaction surfaces of two neighboring subunits such that a critical structure of a conserved arginine finger motif is provided in trans relative to the ATP-binding site of the Walker A box of the adjacent subunit. The six ATPase active sites, however, are likely to contribute differentially to the complex helicase activity. The existence of maternal and zygotic forms of mcm3 and mcm6 suggests that specific forms of mcm2-7 complexes may be used during different stages of development. The polypeptide is DNA replication licensing factor mcm7-B (mcm7-b) (Xenopus laevis (African clawed frog)).